The following is a 927-amino-acid chain: 2-oxoadipate dehydrogenase complex component E1 (927 aa).

The protein belongs to the alpha-ketoglutarate dehydrogenase family. In terms of assembly, the 2-oxoadipate dehydrogenase complex is composed of OADH (2-oxoadipate dehydrogenase; E1a), DLST (dihydrolipoamide succinyltransferase; E2) and DLD (dihydrolipoamide dehydrogenase; E3). E1a functional unit is a dimer. Thiamine diphosphate serves as cofactor.

It localises to the mitochondrion. The catalysed reaction is N(6)-[(R)-lipoyl]-L-lysyl-[protein] + 2-oxoadipate + H(+) = N(6)-[(R)-S(8)-glutaryldihydrolipoyl]-L-lysyl-[protein] + CO2. Its pathway is amino-acid degradation. Functionally, 2-oxoadipate dehydrogenase (E1a) component of the 2-oxoadipate dehydrogenase complex (OADHC). Participates in the first step, rate limiting for the overall conversion of 2-oxoadipate (alpha-ketoadipate) to glutaryl-CoA and CO(2) catalyzed by the whole OADHC. Catalyzes the irreversible decarboxylation of 2-oxoadipate via the thiamine diphosphate (ThDP) cofactor and subsequent transfer of the decarboxylated acyl intermediate on an oxidized dihydrolipoyl group that is covalently amidated to the E2 enzyme (dihydrolipoyllysine-residue succinyltransferase or DLST). Can catalyze the decarboxylation of 2-oxoglutarate in vitro, but at a much lower rate than 2-oxoadipate. Responsible for the last step of L-lysine, L-hydroxylysine and L-tryptophan catabolism with the common product being 2-oxoadipate. The sequence is that of 2-oxoadipate dehydrogenase complex component E1 (dhtkd1) from Xenopus laevis (African clawed frog).